The following is an 83-amino-acid chain: MNGKLLLVSLMVTMLVMQPAEAGVWDWLKKTAKNVWNSDIVKQLKGKAINAAKNYVAEKIGATPSVAGQIPFDEFMDILHYRP.

Positions 1–22 are cleaved as a signal peptide; sequence MNGKLLLVSLMVTMLVMQPAEA. Residues 66-83 constitute a propeptide that is removed on maturation; sequence VAGQIPFDEFMDILHYRP.

It belongs to the non-disulfide-bridged peptide (NDBP) superfamily. Long chain multifunctional peptide (group 2) family. Expressed by the venom gland.

The protein localises to the secreted. It localises to the target cell membrane. In terms of biological role, amphipathic peptide with potent activities against both Gram-positive and Gram-negative bacteria. Is the most active against the two Gram-positive Bacillus megaterium and Micrococcus luteus (MIC=4.0 uM for both). It has relatively low hemolytic activity against human erythrocytes. The sequence is that of Heterin-1 from Heterometrus spinifer (Asia giant forest scorpion).